We begin with the raw amino-acid sequence, 272 residues long: Exosome complex component Rrp42 (272 aa).

It belongs to the RNase PH family. Rrp42 subfamily. In terms of assembly, component of the archaeal exosome complex. Forms a hexameric ring-like arrangement composed of 3 Rrp41-Rrp42 heterodimers. The hexameric ring associates with a trimer of Rrp4 and/or Csl4 subunits.

It is found in the cytoplasm. Non-catalytic component of the exosome, which is a complex involved in RNA degradation. Contributes to the structuring of the Rrp41 active site. The chain is Exosome complex component Rrp42 from Thermococcus onnurineus (strain NA1).